The primary structure comprises 78 residues: Alpha-neurotoxin homolog 7 (78 aa).

The first 21 residues, 1-21 (MKTLLLTLVVVTIVCLDFGYT), serve as a signal peptide directing secretion. Cystine bridges form between cysteine 24-cysteine 42, cysteine 37-cysteine 57, cysteine 59-cysteine 70, and cysteine 71-cysteine 76.

Belongs to the three-finger toxin family. Short-chain subfamily. Orphan group XII sub-subfamily. In terms of tissue distribution, expressed by the venom gland.

It localises to the secreted. In Micrurus corallinus (Brazilian coral snake), this protein is Alpha-neurotoxin homolog 7.